A 101-amino-acid chain; its full sequence is Small ribosomal subunit protein uS14 (101 aa).

It belongs to the universal ribosomal protein uS14 family. In terms of assembly, part of the 30S ribosomal subunit. Contacts proteins S3 and S10.

Functionally, binds 16S rRNA, required for the assembly of 30S particles and may also be responsible for determining the conformation of the 16S rRNA at the A site. This Nitrosomonas europaea (strain ATCC 19718 / CIP 103999 / KCTC 2705 / NBRC 14298) protein is Small ribosomal subunit protein uS14.